Here is a 560-residue protein sequence, read N- to C-terminus: Dihydroxy-acid dehydratase (560 aa).

Position 80 (Asp-80) interacts with Mg(2+). Residue Cys-121 participates in [2Fe-2S] cluster binding. Positions 122 and 123 each coordinate Mg(2+). Lys-123 is modified (N6-carboxylysine). Position 194 (Cys-194) interacts with [2Fe-2S] cluster. Glu-447 serves as a coordination point for Mg(2+). Ser-473 acts as the Proton acceptor in catalysis.

It belongs to the IlvD/Edd family. As to quaternary structure, homodimer. [2Fe-2S] cluster serves as cofactor. Requires Mg(2+) as cofactor.

The enzyme catalyses (2R)-2,3-dihydroxy-3-methylbutanoate = 3-methyl-2-oxobutanoate + H2O. The catalysed reaction is (2R,3R)-2,3-dihydroxy-3-methylpentanoate = (S)-3-methyl-2-oxopentanoate + H2O. It functions in the pathway amino-acid biosynthesis; L-isoleucine biosynthesis; L-isoleucine from 2-oxobutanoate: step 3/4. It participates in amino-acid biosynthesis; L-valine biosynthesis; L-valine from pyruvate: step 3/4. Functionally, functions in the biosynthesis of branched-chain amino acids. Catalyzes the dehydration of (2R,3R)-2,3-dihydroxy-3-methylpentanoate (2,3-dihydroxy-3-methylvalerate) into 2-oxo-3-methylpentanoate (2-oxo-3-methylvalerate) and of (2R)-2,3-dihydroxy-3-methylbutanoate (2,3-dihydroxyisovalerate) into 2-oxo-3-methylbutanoate (2-oxoisovalerate), the penultimate precursor to L-isoleucine and L-valine, respectively. The sequence is that of Dihydroxy-acid dehydratase from Chloroherpeton thalassium (strain ATCC 35110 / GB-78).